Here is a 261-residue protein sequence, read N- to C-terminus: tRNA U34 carboxymethyltransferase (261 aa).

Carboxy-S-adenosyl-L-methionine contacts are provided by residues K25, W39, K44, G63, 114–115 (VE), Y135, and R250.

Belongs to the class I-like SAM-binding methyltransferase superfamily. CmoB family. As to quaternary structure, homotetramer.

The enzyme catalyses carboxy-S-adenosyl-L-methionine + 5-hydroxyuridine(34) in tRNA = 5-carboxymethoxyuridine(34) in tRNA + S-adenosyl-L-homocysteine + H(+). Catalyzes carboxymethyl transfer from carboxy-S-adenosyl-L-methionine (Cx-SAM) to 5-hydroxyuridine (ho5U) to form 5-carboxymethoxyuridine (cmo5U) at position 34 in tRNAs. In Helicobacter pylori (strain J99 / ATCC 700824) (Campylobacter pylori J99), this protein is tRNA U34 carboxymethyltransferase.